We begin with the raw amino-acid sequence, 465 residues long: Cysteine--tRNA ligase 2 (465 aa).

Residue C30 coordinates Zn(2+). The 'HIGH' region signature appears at 32–42; sequence ITVYDYCHVGH. Residues C214, H239, and E243 each coordinate Zn(2+). The short motif at 271-275 is the 'KMSKS' region element; it reads KMSKS. Position 274 (K274) interacts with ATP.

It belongs to the class-I aminoacyl-tRNA synthetase family. As to quaternary structure, monomer. It depends on Zn(2+) as a cofactor.

The protein localises to the cytoplasm. The catalysed reaction is tRNA(Cys) + L-cysteine + ATP = L-cysteinyl-tRNA(Cys) + AMP + diphosphate. The polypeptide is Cysteine--tRNA ligase 2 (Burkholderia lata (strain ATCC 17760 / DSM 23089 / LMG 22485 / NCIMB 9086 / R18194 / 383)).